The primary structure comprises 499 residues: Na(+)/H(+) antiporter NhaB (499 aa).

Helical transmembrane passes span 38 to 58, 62 to 82, 89 to 109, 128 to 148, 149 to 169, 204 to 224, 242 to 262, 310 to 330, 349 to 369, 393 to 413, 449 to 469, and 478 to 498; these read VSPF…LAMA, YPLQ…LTSA, VLAN…IYFM, LLLS…LDAL, TVTA…HRFA, LIMH…VGEP, LVMA…CAIL, VLVF…LLII, FEEA…VAVI, MFFV…VATV, ATPN…APLI, and IMAL…VILF.

It belongs to the NhaB Na(+)/H(+) (TC 2.A.34) antiporter family.

The protein localises to the cell inner membrane. It carries out the reaction 2 Na(+)(in) + 3 H(+)(out) = 2 Na(+)(out) + 3 H(+)(in). Na(+)/H(+) antiporter that extrudes sodium in exchange for external protons. This is Na(+)/H(+) antiporter NhaB from Saccharophagus degradans (strain 2-40 / ATCC 43961 / DSM 17024).